A 301-amino-acid polypeptide reads, in one-letter code: Homoserine O-acetyltransferase (301 aa).

C142 serves as the catalytic Acyl-thioester intermediate. Substrate is bound by residues K163 and S192. The Proton acceptor role is filled by H235. Residue E237 is part of the active site. Substrate is bound at residue R249.

This sequence belongs to the MetA family.

It is found in the cytoplasm. It carries out the reaction L-homoserine + acetyl-CoA = O-acetyl-L-homoserine + CoA. Its pathway is amino-acid biosynthesis; L-methionine biosynthesis via de novo pathway; O-acetyl-L-homoserine from L-homoserine: step 1/1. Functionally, transfers an acetyl group from acetyl-CoA to L-homoserine, forming acetyl-L-homoserine. The sequence is that of Homoserine O-acetyltransferase from Lachnoclostridium phytofermentans (strain ATCC 700394 / DSM 18823 / ISDg) (Clostridium phytofermentans).